Consider the following 611-residue polypeptide: Leukotriene A-4 hydrolase (611 aa).

Lys-73 bears the N6-acetyllysine mark. A peptide contacts are provided by residues 135–137 (QCQ) and 267–272 (PYGGME). Residue His-296 participates in Zn(2+) binding. Glu-297 acts as the Proton acceptor in catalysis. Zn(2+) contacts are provided by His-300 and Glu-319. Lys-337 is subject to N6-acetyllysine. The Proton donor role is filled by Tyr-384. Lys-414 is modified (N6-acetyllysine). Position 416 is a phosphoserine (Ser-416). 564–566 (RMK) is an a peptide binding site. An N6-acetyllysine modification is found at Lys-573.

Belongs to the peptidase M1 family. Monomer. Zn(2+) serves as cofactor. In terms of processing, phosphorylation at Ser-416 inhibits leukotriene-A4 hydrolase activity.

It localises to the cytoplasm. The catalysed reaction is leukotriene A4 + H2O = leukotriene B4. The enzyme catalyses (5S,6S)-epoxy-(18R)-hydroxy-(7E,9E,11Z,14Z,16E)-eicosapentaenoate + H2O = resolvin E1. It catalyses the reaction (5S,6S)-epoxy-(18S)-hydroxy-(7E,9E,11Z,14Z,16E)-eicosapentaenoate + H2O = 18S-resolvin E1. It carries out the reaction Release of the N-terminal residue from a tripeptide.. The protein operates within lipid metabolism; leukotriene B4 biosynthesis. With respect to regulation, inhibited by bestatin. The epoxide hydrolase activity is restrained by suicide inactivation that involves binding of LTA4 to Tyr-379. 4-(4-benzylphenyl)thiazol-2-amine (ARM1) selectively inhibits the epoxide hydrolase activity. Its function is as follows. Bifunctional zinc metalloenzyme that comprises both epoxide hydrolase (EH) and aminopeptidase activities. Acts as an epoxide hydrolase to catalyze the conversion of LTA4 to the pro-inflammatory mediator leukotriene B4 (LTB4). Also has aminopeptidase activity, with high affinity for N-terminal arginines of various synthetic tripeptides. In addition to its pro-inflammatory EH activity, may also counteract inflammation by its aminopeptidase activity, which inactivates by cleavage another neutrophil attractant, the tripeptide Pro-Gly-Pro (PGP), a bioactive fragment of collagen generated by the action of matrix metalloproteinase-9 (MMP9) and prolylendopeptidase (PREPL). Involved also in the biosynthesis of resolvin E1 and 18S-resolvin E1 from eicosapentaenoic acid, two lipid mediators that show potent anti-inflammatory and pro-resolving actions. The polypeptide is Leukotriene A-4 hydrolase (Lta4h) (Mus musculus (Mouse)).